The following is a 264-amino-acid chain: Complement C1q tumor necrosis factor-related protein 6 (264 aa).

Positions 1–24 (MRVIMGIASLGFLWAVFLLPLVFG) are cleaved as a signal peptide. Residue Asn-77 is glycosylated (N-linked (GlcNAc...) asparagine). The segment at 81-125 (LKGDKGDRGPTGTPGKPGKNGTRGDRGSQGVKGDKGQAGSPGSSC) is disordered. In terms of domain architecture, Collagen-like spans 83–124 (GDKGDRGPTGTPGKPGKNGTRGDRGSQGVKGDKGQAGSPGSS). Low complexity predominate over residues 90 to 100 (PTGTPGKPGKN). The region spanning 125-264 (CQTHYSAFSV…SGHLIKAEDN (140 aa)) is the C1q domain.

The protein localises to the secreted. This chain is Complement C1q tumor necrosis factor-related protein 6 (C1qtnf6), found in Mus musculus (Mouse).